A 237-amino-acid polypeptide reads, in one-letter code: MQQSKEERVHDVFEKISDKYDVMNSVISFQRHKAWRKETMRIMDVKPGSKALDVCCGTADWTIALAGAVGEQGKVVGLDFSENMLSVGKQKVEALQLKQVELLHGNAMELPFEDNTFDYVTIGFGLRNVPDYMHVLKEMTRVVKPGGKVICLETSQPTMIGFRQGYILYFKYIMPLFGKLFAKSYKEYSWLQESASTFPGMKELANMFEKAGLERVQVKPFTFGVAAMHLGMKPESK.

S-adenosyl-L-methionine is bound by residues Thr58, Asp79, and 106–107 (NA).

This sequence belongs to the class I-like SAM-binding methyltransferase superfamily. MenG/UbiE family.

It carries out the reaction a 2-demethylmenaquinol + S-adenosyl-L-methionine = a menaquinol + S-adenosyl-L-homocysteine + H(+). Its pathway is quinol/quinone metabolism; menaquinone biosynthesis; menaquinol from 1,4-dihydroxy-2-naphthoate: step 2/2. Methyltransferase required for the conversion of demethylmenaquinol (DMKH2) to menaquinol (MKH2). The polypeptide is Demethylmenaquinone methyltransferase (Bacillus anthracis (strain A0248)).